We begin with the raw amino-acid sequence, 286 residues long: Formamidopyrimidine-DNA glycosylase (286 aa).

Residue proline 2 is the Schiff-base intermediate with DNA of the active site. Glutamate 3 functions as the Proton donor in the catalytic mechanism. The Proton donor; for beta-elimination activity role is filled by lysine 61. Histidine 96, arginine 117, and lysine 160 together coordinate DNA. An FPG-type zinc finger spans residues 246-280 (DAYGREGLPCRRCATPMRRRPWMNRSSYFCPKCQR). Arginine 270 acts as the Proton donor; for delta-elimination activity in catalysis.

It belongs to the FPG family. Monomer. The cofactor is Zn(2+).

It catalyses the reaction Hydrolysis of DNA containing ring-opened 7-methylguanine residues, releasing 2,6-diamino-4-hydroxy-5-(N-methyl)formamidopyrimidine.. It carries out the reaction 2'-deoxyribonucleotide-(2'-deoxyribose 5'-phosphate)-2'-deoxyribonucleotide-DNA = a 3'-end 2'-deoxyribonucleotide-(2,3-dehydro-2,3-deoxyribose 5'-phosphate)-DNA + a 5'-end 5'-phospho-2'-deoxyribonucleoside-DNA + H(+). Its function is as follows. Involved in base excision repair of DNA damaged by oxidation or by mutagenic agents. Acts as a DNA glycosylase that recognizes and removes damaged bases. Has a preference for oxidized purines, such as 7,8-dihydro-8-oxoguanine (8-oxoG). Has AP (apurinic/apyrimidinic) lyase activity and introduces nicks in the DNA strand. Cleaves the DNA backbone by beta-delta elimination to generate a single-strand break at the site of the removed base with both 3'- and 5'-phosphates. The chain is Formamidopyrimidine-DNA glycosylase from Streptomyces avermitilis (strain ATCC 31267 / DSM 46492 / JCM 5070 / NBRC 14893 / NCIMB 12804 / NRRL 8165 / MA-4680).